The chain runs to 264 residues: tRNA (guanine-N(1)-)-methyltransferase (264 aa).

S-adenosyl-L-methionine is bound at residue 149–154; the sequence is IGDYVL.

Belongs to the RNA methyltransferase TrmD family. In terms of assembly, homodimer.

It is found in the cytoplasm. It catalyses the reaction guanosine(37) in tRNA + S-adenosyl-L-methionine = N(1)-methylguanosine(37) in tRNA + S-adenosyl-L-homocysteine + H(+). Its function is as follows. Specifically methylates guanosine-37 in various tRNAs. The chain is tRNA (guanine-N(1)-)-methyltransferase from Methylobacillus flagellatus (strain ATCC 51484 / DSM 6875 / VKM B-1610 / KT).